Here is a 211-residue protein sequence, read N- to C-terminus: uncharacterized protein (211 aa).

Helical transmembrane passes span phenylalanine 77–isoleucine 97, glycine 113–glycine 133, isoleucine 152–proline 172, and leucine 179–glycine 199.

The protein resides in the cell membrane. This is an uncharacterized protein from Bacillus subtilis (strain 168).